Reading from the N-terminus, the 280-residue chain is Ribosomal RNA-processing protein 7 homolog A (280 aa).

The region spanning 59 to 159 (RTLFVLNVPP…TGIHKWISDY (101 aa)) is the RRM domain. Phosphoserine is present on Ser-99.

This sequence belongs to the RRP7 family. In terms of assembly, part of the small subunit (SSU) processome, composed of more than 70 proteins and the RNA chaperone small nucleolar RNA (snoRNA) U3. Interacts with NOL6; required for NOL6 localization to nucleolus.

The protein localises to the nucleus. It is found in the nucleolus. It localises to the cell projection. Its subcellular location is the cilium. The protein resides in the cytoplasm. The protein localises to the cytoskeleton. It is found in the microtubule organizing center. It localises to the centrosome. In terms of biological role, nucleolar protein that is involved in ribosomal RNA (rRNA) processing. Also plays a role in primary cilia resorption, and cell cycle progression in neurogenesis and neocortex development. Part of the small subunit (SSU) processome, first precursor of the small eukaryotic ribosomal subunit. During the assembly of the SSU processome in the nucleolus, many ribosome biogenesis factors, an RNA chaperone and ribosomal proteins associate with the nascent pre-rRNA and work in concert to generate RNA folding, modifications, rearrangements and cleavage as well as targeted degradation of pre-ribosomal RNA by the RNA exosome. In Pongo abelii (Sumatran orangutan), this protein is Ribosomal RNA-processing protein 7 homolog A (RRP7A).